A 90-amino-acid polypeptide reads, in one-letter code: UPF0223 protein SH1855 (90 aa).

Belongs to the UPF0223 family.

This chain is UPF0223 protein SH1855, found in Staphylococcus haemolyticus (strain JCSC1435).